A 309-amino-acid polypeptide reads, in one-letter code: tRNA pseudouridine synthase B (309 aa).

Catalysis depends on aspartate 52, which acts as the Nucleophile.

It belongs to the pseudouridine synthase TruB family. Type 1 subfamily.

It catalyses the reaction uridine(55) in tRNA = pseudouridine(55) in tRNA. In terms of biological role, responsible for synthesis of pseudouridine from uracil-55 in the psi GC loop of transfer RNAs. The polypeptide is tRNA pseudouridine synthase B (Leptospira interrogans serogroup Icterohaemorrhagiae serovar copenhageni (strain Fiocruz L1-130)).